The primary structure comprises 288 residues: Plasmodesmata-located protein 6 (288 aa).

An N-terminal signal peptide occupies residues 1–22 (MFATKTVLFIAVVSLLGTFSSA). Over 23–256 (AVDTFIYGGC…NNDDDEIEKT (234 aa)) the chain is Extracellular. 2 consecutive Gnk2-homologous domains span residues 25 to 132 (DTFI…NTTF) and 137 to 234 (DKTV…ARGG). Intrachain disulfides connect Cys32-Cys110, Cys84-Cys95, Cys98-Cys123, Cys145-Cys212, Cys188-Cys197, and Cys200-Cys225. A helical membrane pass occupies residues 257 to 277 (LAIIVGLIAGVTLLVVFLSFM). The segment at 257–277 (LAIIVGLIAGVTLLVVFLSFM) is necessary and sufficient for plasmodesmal targeting. The Cytoplasmic segment spans residues 278–288 (AKSCERGKGGK).

Belongs to the cysteine-rich repeat secretory protein family. Plasmodesmata-located proteins (PDLD) subfamily. (Microbial infection) Interacts with Grapevine fanleaf virus (GFLV) 2B-MP. As to expression, highly expressed in inflorescence silique (at mRNA level).

The protein resides in the cell membrane. It is found in the cell junction. It localises to the plasmodesma. Its function is as follows. Modulates cell-to-cell trafficking. This chain is Plasmodesmata-located protein 6, found in Arabidopsis thaliana (Mouse-ear cress).